A 312-amino-acid polypeptide reads, in one-letter code: Malate dehydrogenase (312 aa).

NAD(+) contacts are provided by residues G7–G13 and D34. Residues R81 and R87 each coordinate substrate. NAD(+) is bound by residues N94 and I117–N119. Substrate contacts are provided by N119 and R153. H177 (proton acceptor) is an active-site residue. Position 227 (M227) interacts with NAD(+).

This sequence belongs to the LDH/MDH superfamily. MDH type 1 family. Homodimer.

The enzyme catalyses (S)-malate + NAD(+) = oxaloacetate + NADH + H(+). Functionally, catalyzes the reversible oxidation of malate to oxaloacetate. This is Malate dehydrogenase from Escherichia coli O139:H28 (strain E24377A / ETEC).